The sequence spans 201 residues: Glutathione peroxidase 1, mitochondrial (201 aa).

A mitochondrion-targeting transit peptide spans M1–G27. The active site involves U75. A non-standard amino acid (selenocysteine) is located at residue U75.

It localises to the mitochondrion. It catalyses the reaction 2 glutathione + H2O2 = glutathione disulfide + 2 H2O. In terms of biological role, may constitute a glutathione peroxidase-like protective system against oxidative stresses. Hydrogen peroxide, tert-butyl hydroperoxide and cumene, but not phosphatidylcholine hydroperoxide, can act as acceptors. The sequence is that of Glutathione peroxidase 1, mitochondrial from Chlamydomonas reinhardtii (Chlamydomonas smithii).